Consider the following 592-residue polypeptide: MPGFNYGGKGDGTGWSSERGSGPEPGGGSHGNSGGHDRGDSSNVGNESVTVMKPGDSYNTPWGKVIINAAGQPTMNGTVMTADNSSMVPYGRGFTRVLNSLVNNPVSPAGQNGGKSPVQTAVENYLMVQSGNLPPGYWLSNGKVMTEVREERTSGGGGKNGNERTWTVKVPREVPQLTASYNEGMRIRQEAADRARAEANARALAEEEARAIASGKSKAEFDAGKRVEAAQAAINTAQLNVNNLSGAVSAANQVITQKQAEMTPLKNELAAANQRVQETLKFINDPIRSRIHFNMRSGLIRAQHNVDTKQNEINAAVANRDALNSQLSQANNILQNARNEKSAADAALSAATAQRLQAEAALRAAAEAAEKARQRQAEEAERQRQAMEVAEKAKDERELLEKTSELIAGMGDKIGEHLGDKYKAIAKDIADNIKNFQGKTIRSFDDAMASLNKITANPAMKINKADRDALVNAWKHVDAQDMANKLGNLSKAFKVADVVMKVEKVREKSIEGYETGNWGPLMLEVESWVLSGIASSVALGIFSATLGAYALSLGVPAIAVGIAGILLAAVVGALIDDKFADALNNEIIRPAH.

Gly residues-rich tracts occupy residues 1-13 (MPGFNYGGKGDGT) and 23-34 (PEPGGGSHGNSG). Disordered stretches follow at residues 1 to 57 (MPGF…PGDS) and 373 to 395 (RQRQAEEAERQRQAMEVAEKAKD). The next 2 membrane-spanning stretches (helical) occupy residues 528–548 (WVLSGIASSVALGIFSATLGA) and 555–575 (VPAIAVGIAGILLAAVVGALI).

It belongs to the channel forming colicin family.

The protein localises to the cell membrane. Functionally, this colicin is a channel-forming colicin. This class of transmembrane toxins depolarize the cytoplasmic membrane, leading to dissipation of cellular energy. Colicins are polypeptide toxins produced by and active against E.coli and closely related bacteria. This chain is Colicin-A (caa), found in Citrobacter freundii.